Reading from the N-terminus, the 133-residue chain is UPF0102 protein Plav_3586 (133 aa).

Belongs to the UPF0102 family.

The polypeptide is UPF0102 protein Plav_3586 (Parvibaculum lavamentivorans (strain DS-1 / DSM 13023 / NCIMB 13966)).